Consider the following 382-residue polypeptide: Alanine racemase 1 (382 aa).

Residue Lys39 is the Proton acceptor; specific for D-alanine of the active site. At Lys39 the chain carries N6-(pyridoxal phosphate)lysine. Arg138 is a binding site for substrate. Tyr265 functions as the Proton acceptor; specific for L-alanine in the catalytic mechanism. Met312 provides a ligand contact to substrate.

This sequence belongs to the alanine racemase family. The cofactor is pyridoxal 5'-phosphate.

The catalysed reaction is L-alanine = D-alanine. The protein operates within amino-acid biosynthesis; D-alanine biosynthesis; D-alanine from L-alanine: step 1/1. Catalyzes the interconversion of L-alanine and D-alanine. May also act on other amino acids. This Staphylococcus aureus (strain N315) protein is Alanine racemase 1 (alr1).